We begin with the raw amino-acid sequence, 475 residues long: BTB/POZ domain-containing protein 10 (475 aa).

Positions 1–143 are disordered; sequence MAGRPHPYDG…SSQSSSDGSC (143 aa). Positions 22–31 are enriched in basic residues; the sequence is LHSRPRKLYK. The segment covering 57–80 has biased composition (basic and acidic residues); the sequence is GHERSRDRRRSSDRSRDSSHERTE. Positions 81–94 are enriched in polar residues; that stretch reads SQLTPCIRNVTSPT. The span at 97 to 107 shows a compositional bias: basic and acidic residues; that stretch reads HHVEREKDHSS. Over residues 108–142 the composition is skewed to low complexity; that stretch reads SRPSSPRPQKASPNGSISSAGNSSRNSSQSSSDGS. Residues 146–475 are interaction with AKT family members; sequence AGEMVFVYEN…LDPDAQNPML (330 aa). The region spanning 167–241 is the BTB domain; that stretch reads ERVTLIVDNT…YKTGIIRCPD (75 aa). Positions 455–475 are disordered; the sequence is LPIHPPSGNSDLDPDAQNPML.

Interacts (via C-terminal 330-amino-acid region) with AKT1; AKT2 and AKT3. Interacts with PPP2CA and PPP1CA. As to expression, ubiquitously expressed. Highly expressed in adult brain, testis, aorta and small intestine and weakly expressed in the heart, lung, liver, kidney, pancreas, spleen, thymus, prostate, ovary and colon. Down-regulated in glioma.

It is found in the nucleus. The protein resides in the cytoplasm. Its function is as follows. Plays a major role as an activator of AKT family members by inhibiting PPP2CA-mediated dephosphorylation, thereby keeping AKTs activated. Plays a role in preventing motor neuronal death and accelerating the growth of pancreatic beta cells. This Homo sapiens (Human) protein is BTB/POZ domain-containing protein 10 (BTBD10).